Reading from the N-terminus, the 268-residue chain is Movement protein (268 aa).

Residues 216-238 (KKSDVRKGKNSSSVRSVPNKNYR) form a disordered region. Polar residues predominate over residues 225 to 237 (NSSSVRSVPNKNY).

Belongs to the tobamovirus movement protein family. In terms of assembly, binds to host RBCS at the plasmodesmata; this interaction seems required for viral systemic movement. In resistant plants, interacts with host MBP2C at host microtubules; this interaction prevents virus cell to cell movement. In resistant plants, interacts with host resistance (R) protein (e.g. tomato ToMV resistance protein TM-2(2), AC Q71BG9) at the host plasma membrane; this interaction triggers host defense responses leading to programmed cell death.

It is found in the host cytoplasm. It localises to the host cytoskeleton. The protein localises to the host cell junction. Its subcellular location is the host plasmodesma. Functionally, transports viral genome to neighboring plant cells directly through plasmosdesmata, without any budding. The movement protein allows efficient cell to cell propagation, by bypassing the host cell wall barrier. Forms a ribonucleoprotein complex with viral RNA. Binds microtubules and modulates microtubule stability. Can bind double-stranded DNA. Triggers host hypersensitive defense reaction in incompatible plants harboring resistance (R) proteins. The polypeptide is Movement protein (MP) (Nicotiana tabacum (Common tobacco)).